Here is a 401-residue protein sequence, read N- to C-terminus: Tyrosine--tRNA ligase (401 aa).

A 'HIGH' region motif is present at residues 45–54 (PTAPDLHLGH). The 'KMSKS' region signature appears at 230–234 (KMSKS). K233 contacts ATP. One can recognise an S4 RNA-binding domain in the interval 339–399 (IWLAKALVEC…GKRKFAKLKV (61 aa)).

Belongs to the class-I aminoacyl-tRNA synthetase family. TyrS type 2 subfamily. Homodimer.

It is found in the cytoplasm. It carries out the reaction tRNA(Tyr) + L-tyrosine + ATP = L-tyrosyl-tRNA(Tyr) + AMP + diphosphate + H(+). Functionally, catalyzes the attachment of tyrosine to tRNA(Tyr) in a two-step reaction: tyrosine is first activated by ATP to form Tyr-AMP and then transferred to the acceptor end of tRNA(Tyr). This Campylobacter jejuni subsp. jejuni serotype O:2 (strain ATCC 700819 / NCTC 11168) protein is Tyrosine--tRNA ligase.